The sequence spans 387 residues: Pepsin II-1 (387 aa).

The first 15 residues, 1 to 15, serve as a signal peptide directing secretion; it reads MKWLLLLGLLALSEC. The propeptide at 16–59 is activation peptide; that stretch reads IVHKVPLVRKKSLRKNLIEKGLLQDYLKTHTPNLATKYFPKETF. The 310-residue stretch at 75–384 folds into the Peptidase A1 domain; that stretch reads YFGTISIGTP…DRANNQVGLA (310 aa). Aspartate 93 is a catalytic residue. A disulfide bond links cysteine 106 and cysteine 111. A Phosphoserine modification is found at serine 129. The cysteines at positions 267 and 271 are disulfide-linked. Aspartate 276 is an active-site residue. Cysteine 310 and cysteine 343 form a disulfide bridge.

The protein belongs to the peptidase A1 family.

The protein resides in the secreted. It catalyses the reaction Preferential cleavage: hydrophobic, preferably aromatic, residues in P1 and P1' positions. Cleaves 1-Phe-|-Val-2, 4-Gln-|-His-5, 13-Glu-|-Ala-14, 14-Ala-|-Leu-15, 15-Leu-|-Tyr-16, 16-Tyr-|-Leu-17, 23-Gly-|-Phe-24, 24-Phe-|-Phe-25 and 25-Phe-|-Tyr-26 bonds in the B chain of insulin.. Its function is as follows. Shows particularly broad specificity; although bonds involving phenylalanine and leucine are preferred, many others are also cleaved to some extent. The chain is Pepsin II-1 from Oryctolagus cuniculus (Rabbit).